A 504-amino-acid polypeptide reads, in one-letter code: FAD-dependent monooxygenase nsrK (504 aa).

R146 contributes to the FAD binding site. R227 is an active-site residue. FAD is bound by residues D340 and G353.

The protein belongs to the paxM FAD-dependent monooxygenase family. FAD is required as a cofactor.

It participates in secondary metabolite biosynthesis. FAD-dependent monooxygenase; part of the gene cluster that mediates the biosynthesis of the tetrahydroxanthone dimer neosartorin, which exhibits antibacterial activity. The two different monomeric units appear to be synthesized by the same set of enzymes, among which the Baeyer-Villiger monooxygenase nsrF is the key enzyme for the divergence of the biosynthetic routes. The pathway begins with the synthesis of atrochrysone thioester by the polyketide synthase nsrB. The atrochrysone carboxyl ACP thioesterase nsrC then breaks the thioester bond and releases the atrochrysone carboxylic acid from AacuL. Atrochrysone carboxylic acid is decarboxylated by the decarboxylase nsrE, and oxidized by the anthrone oxygenase nsrD to yield emodin. Emodin is then reduced to emodin hydroquinone by the oxidoreductase nsrR. A-ring reduction by the short chain dehydrogenase nsrJ, dehydration by the scytalone dehydratase-like protein nsrI and probable spontaneous re-oxidation, results in overall deoxygenation to chrysophanol. The Baeyer-Villiger monooxygenase nsrF accepts chrysophanol as a substrate to insert one oxygen atom at two different positions to yield the precursors of both monomric units. NsrF is promiscuous/flexible in interacting with the 2 (non methylated and methylated) aromatic rings of chrysophanol, thus diverging the biosynthetic pathway at this point. After the hydrolysis of the lactones, methylesterification by the methyltransferase nsrG yields respectively moniliphenone and 2,2',6'-trihydroxy-4-methyl-6-methoxya-cyldiphenylmethanone. The next steps are the hydroxylation by the FAD-dependent monooxygenase nsrK, followed by isomerization by the monooxygenase nsrQ. The short chain dehydrogenase/reductase nsrO then catalyzes the C-5 ketoreduction to give the xanthone skeleton of blennolide C and 5-acetylblennolide A. The acetyltransferase nsrL has a strict substrate specificity and uses only blennolide A but not blennolide C to yield 5-acetylblennolide A as the single-acetylated product. In the final step of the biosynthesis, the heterodimerization of the 2 xanthones, blennolide C and 5-acetylblennolide A, is catalyzed by the cytochrome P450 monooxygenase nsrP. NsrP can utilize at least three different xanthones as its substrates to perform the dimerization reaction. This Aspergillus novofumigatus (strain IBT 16806) protein is FAD-dependent monooxygenase nsrK.